The following is a 389-amino-acid chain: Alanine racemase TOXG (389 aa).

At lysine 235 the chain carries N6-(pyridoxal phosphate)lysine.

This sequence belongs to the threonine aldolase family. The cofactor is pyridoxal 5'-phosphate.

The enzyme catalyses L-alanine = D-alanine. The protein operates within mycotoxin biosynthesis; HC-toxin biosynthesis. In terms of biological role, alanine racemase, part of the diffuse TOX2 gene cluster that mediates the biosynthesis of the HC-toxin, cyclic tetrapeptide of structure cyclo(D-Pro-L-Ala-D-Ala-L-Aeo), where Aeo stands for 2-amino-9,10-epoxi-8-oxodecanoic acid. HC-toxin is a determinant of specificity and virulence in the interaction between the producing fungus and its host, maize. TOXG catalyzes the conversion of L-alanine into D-alanine, an essential precursor for the production of the major forms of HC-toxin by the non-ribosomal peptide synthetase HTS1. The polypeptide is Alanine racemase TOXG (Cochliobolus carbonum (Maize leaf spot fungus)).